The sequence spans 110 residues: Putative protein RIG (110 aa).

As to expression, expressed predominantly in brain and weakly in heart and lung. Expression is reduced or undetectable in cultured glioma cells, primary glioblastoma cells and malignant glioblastoma tumors.

May serve as a molecular marker for or play a role in the malignant progression of glioblastomas. This chain is Putative protein RIG (RIG), found in Homo sapiens (Human).